The following is a 152-amino-acid chain: Deoxyuridine 5'-triphosphate nucleotidohydrolase (152 aa).

Substrate contacts are provided by residues 71–73 (RSG), Asn84, 88–90 (LID), and Met98.

It belongs to the dUTPase family. Mg(2+) serves as cofactor.

It carries out the reaction dUTP + H2O = dUMP + diphosphate + H(+). It functions in the pathway pyrimidine metabolism; dUMP biosynthesis; dUMP from dCTP (dUTP route): step 2/2. Functionally, this enzyme is involved in nucleotide metabolism: it produces dUMP, the immediate precursor of thymidine nucleotides and it decreases the intracellular concentration of dUTP so that uracil cannot be incorporated into DNA. The chain is Deoxyuridine 5'-triphosphate nucleotidohydrolase from Klebsiella pneumoniae subsp. pneumoniae (strain ATCC 700721 / MGH 78578).